A 328-amino-acid chain; its full sequence is PhoH-like protein (328 aa).

Residue 135–142 participates in ATP binding; it reads GPAGTGKT.

Belongs to the PhoH family.

It localises to the cytoplasm. The sequence is that of PhoH-like protein from Synechocystis sp. (strain ATCC 27184 / PCC 6803 / Kazusa).